The primary structure comprises 1025 residues: MQLCARAWGLRLGRGAGGGHRLARGTGLSWAQRSRDSSGGGGGGGGGDRGAAGASRLLERLLPRHDDFSRRHIGPGDKDRREMLQALGLASIDELIEKTVPASIRLKRPLKMEDPICENEILETLHAIASKNQIWRSYIGMGYYNCSVPQTILRNLLENSGWVTQYTPYQPEVSQGRLESLLNYQTMVSDITGLDMANASLLDEATAAAEAMQLCHRHNKRKKFFVDPRCHPQTIAVVQTRAKYRGVLVELKLPHEMDFSGKDVCGVLFQYPDTEGKVEDFTELVDRAHQTGSLTCCATDLLALCILRPPGEFGVDIALGNSQRFGVPLGYGGPHAAFFAVKENLVRMMPGRMVGVTRDATGKEVYRLALQTREQHIRRDKATSNICTAQALLANMAAMFAIYHGSQGLKHIAKRVHNATLILSEGLKRAGHQLQHDLFFDTLKVQCGCSVKEVLGRAAQRQINFRLFDDGTLGISLDETVTEKDLDDLLWIFGCESSAELVAEGMGEERRGLLGSSFKRTSPFLTHQVFNSYHSETNLVRYMKKLENKDISLVHSMIPLGSCTMKLNSSSELAPITWREFANIHPFVPLDQAQGYQQLFQGLEKDLCEITGYDRVSFQPNSGAQGEYAGLATIRAYLDQKGERHRTVCLIPKSAHGTNPASAHMAGMKIQPVEVDRYGNIDVAHLKAMVDQHKENLAAIMITYPSTNGVFEENIGDVCALIHQHGGQVYLDGANMNAQVGICRPGDFGSDVSHLNLHKTFCIPHGGGGPGMGPIGVKKHLSPFLPSHPVISIKPTEGTWPVGTVSAAPWGSSSILPISWAYIKMMGGKGLKEATEIAILNANYMAKRLEKHYRVLFRGARGYVAHEFILDTRPFKKSANVEAVDVAKRLQDYGFHAPTMSWPVAGTLMIEPTESEDKAELDRFCDAMISIRQEIADIEEGRIDPRVNPLKMSPHSLTCVTSSCWDRPYSREVAAFPLPFVKPENKFWPTIARIDDIYGDQHLVCTCPPMEVYESPFSEQKRASS.

A mitochondrion-targeting transit peptide spans Met-1–Arg-35. A disordered region spans residues Ala-16 to Ala-51. The segment covering Ser-38 to Gly-50 has biased composition (gly residues). N6-acetyllysine is present on residues Lys-452, Lys-519, Lys-653, and Lys-669. Position 759 is an N6-(pyridoxal phosphate)lysine (Lys-759).

The protein belongs to the GcvP family. In terms of assembly, interacts with GCSH. Homodimer. The glycine cleavage system is composed of four proteins: P (GLDC), T (GCST), L (DLD) and H (GCSH). It depends on pyridoxal 5'-phosphate as a cofactor.

The protein localises to the mitochondrion. It carries out the reaction N(6)-[(R)-lipoyl]-L-lysyl-[glycine-cleavage complex H protein] + glycine + H(+) = N(6)-[(R)-S(8)-aminomethyldihydrolipoyl]-L-lysyl-[glycine-cleavage complex H protein] + CO2. With respect to regulation, stimulated by lipoic acid. Inhibited in presence of methylamine. Functionally, the glycine cleavage system catalyzes the degradation of glycine. The P protein (GLDC) binds the alpha-amino group of glycine through its pyridoxal phosphate cofactor; CO(2) is released and the remaining methylamine moiety is then transferred to the lipoamide cofactor of the H protein (GCSH). This Mus musculus (Mouse) protein is Glycine dehydrogenase (decarboxylating), mitochondrial.